Reading from the N-terminus, the 99-residue chain is MPNSNGPLSNSGGKLQNDPRDRGTSPPQRAIADYDDGESVHLTLDPSVQDGRFHPRFSGLTGTVVGTQGDAFKVEVNDGGMDKTLIVGAAHLRTQRQEE.

A compositionally biased stretch (polar residues) spans 1 to 14; that stretch reads MPNSNGPLSNSGGK. Residues 1–38 are disordered; the sequence is MPNSNGPLSNSGGKLQNDPRDRGTSPPQRAIADYDDGE.

This sequence belongs to the eukaryotic ribosomal protein eL21 family.

In Halobacterium salinarum (strain ATCC 29341 / DSM 671 / R1), this protein is Large ribosomal subunit protein eL21.